The primary structure comprises 529 residues: MSPSEYAREVAKRRTFAIISHPDAGKTTITEKVLLFGQAIQVAGTVKGRGSSQHAKSDWMEMEKQRGISITTSVMQFPYHDCLVNLLDTPGHEDFSEDTYRTLTAVDCCLMVIDAAKGVEDRTRKLMEVTRLRDTPILTFMNKLDRDIRDPMELLDEVESELRIACAPITWPIGCGKLFKGVYHLYKDETYLYQSGKGHTIQEVRVIKGLDNPLLDTAVGEDLAAQLREELELVQGASTEFEEEAFLNGQLTPVFFGTALGNFGVDHMLDGLVAWAPAPMPRMTDVRKVSADEEKFSGFVFKIQANMDPKHRDRVAFMRVVSGRYDKGMKLRQVRTGKDVVIADALTFMAGDRAHVEEAYPGDIIGLHNHGTIQIGDTFTQGEEMKFTGIPNFAPELFRRIRLRDPLKQKQLLKGLVQLSEEGAVQVFRPVANNDLIVGAVGVLQFDVVVARLKSEYNVEAIYESVNVSTARWVECDDVKKFDEFQRKNELHLALDGGDNLAYIAPTMVNLNLTQERYPEVRFRKTREH.

The tr-type G domain occupies 11–280 (AKRRTFAIIS…GLVAWAPAPM (270 aa)). Residues 20-27 (SHPDAGKT), 88-92 (DTPGH), and 142-145 (NKLD) each bind GTP.

It belongs to the TRAFAC class translation factor GTPase superfamily. Classic translation factor GTPase family. PrfC subfamily.

It localises to the cytoplasm. Functionally, increases the formation of ribosomal termination complexes and stimulates activities of RF-1 and RF-2. It binds guanine nucleotides and has strong preference for UGA stop codons. It may interact directly with the ribosome. The stimulation of RF-1 and RF-2 is significantly reduced by GTP and GDP, but not by GMP. This Edwardsiella ictaluri (strain 93-146) protein is Peptide chain release factor 3.